A 429-amino-acid chain; its full sequence is Phosphoribosylamine--glycine ligase (429 aa).

The region spanning Lys109–Asp316 is the ATP-grasp domain. Leu135–Ser196 contacts ATP. Mg(2+) is bound by residues Glu286 and Asn288.

It belongs to the GARS family. In terms of assembly, monomer. Mg(2+) serves as cofactor. Mn(2+) is required as a cofactor.

It catalyses the reaction 5-phospho-beta-D-ribosylamine + glycine + ATP = N(1)-(5-phospho-beta-D-ribosyl)glycinamide + ADP + phosphate + H(+). The protein operates within purine metabolism; IMP biosynthesis via de novo pathway; N(1)-(5-phospho-D-ribosyl)glycinamide from 5-phospho-alpha-D-ribose 1-diphosphate: step 2/2. This Salmonella typhi protein is Phosphoribosylamine--glycine ligase.